A 270-amino-acid chain; its full sequence is uncharacterized protein (270 aa).

A run of 10 helical transmembrane segments spans residues 12–32 (AAIVLSAVLMGTVSVFVRNVG), 35–55 (TLSVTFLRLFFGFLAVLPFCL), 64–84 (TLLGLAVFNFLTVASYIAAIQ), 88–108 (VAMAALLLYMAPVYVIPLSVL), 117–137 (TLLALPLGLIGLYLMLTPYAE), 138–158 (LTFGIIFGIVSGLSYAIVFVL), 171–191 (ITFYNLGLGSAALLPYFLMFG), 194–214 (GSWLWAIGLGVVPTAVPFVLF), 226–246 (APILALIEPLCAGLVGYFYFG), and 248–268 (TLTLTQLIGGAMILAGVLIAW). 2 consecutive EamA domains span residues 19 to 133 (VLMG…LMLT) and 150 to 269 (LSYA…IAWR).

The protein belongs to the EamA transporter family.

The protein localises to the cell membrane. This is an uncharacterized protein from Archaeoglobus fulgidus (strain ATCC 49558 / DSM 4304 / JCM 9628 / NBRC 100126 / VC-16).